A 311-amino-acid chain; its full sequence is Olfactory receptor 8B8 (311 aa).

Topologically, residues Met1–Ile25 are extracellular. N-linked (GlcNAc...) asparagine glycosylation is present at Asn5. The helical transmembrane segment at Pro26–Ile46 threads the bilayer. The Cytoplasmic portion of the chain corresponds to Thr47–His54. The helical transmembrane segment at Leu55–Ser75 threads the bilayer. The Extracellular segment spans residues Val76–Thr99. Cys97 and Cys189 form a disulfide bridge. Residues Gln100–Tyr120 traverse the membrane as a helical segment. Residues Asp121–Gln139 lie on the Cytoplasmic side of the membrane. Residues Val140–Thr160 traverse the membrane as a helical segment. Topologically, residues Ala161–Leu197 are extracellular. A helical transmembrane segment spans residues Val198 to Ser217. The Cytoplasmic segment spans residues Tyr218–Ala237. Residues Phe238–Met258 form a helical membrane-spanning segment. At Tyr259 to Gly271 the chain is on the extracellular side. The chain crosses the membrane as a helical span at residues Lys272–Leu292. Residues Arg293–Ser311 are Cytoplasmic-facing.

This sequence belongs to the G-protein coupled receptor 1 family. As to expression, expressed in the tongue and testis.

Its subcellular location is the cell membrane. In terms of biological role, odorant receptor (Potential). May be involved in taste perception. The sequence is that of Olfactory receptor 8B8 from Homo sapiens (Human).